The following is an 87-amino-acid chain: DNA-directed RNA polymerase subunit omega (87 aa).

Belongs to the RNA polymerase subunit omega family. As to quaternary structure, the RNAP catalytic core consists of 2 alpha, 1 beta, 1 beta' and 1 omega subunit. When a sigma factor is associated with the core the holoenzyme is formed, which can initiate transcription.

It catalyses the reaction RNA(n) + a ribonucleoside 5'-triphosphate = RNA(n+1) + diphosphate. In terms of biological role, promotes RNA polymerase assembly. Latches the N- and C-terminal regions of the beta' subunit thereby facilitating its interaction with the beta and alpha subunits. The sequence is that of DNA-directed RNA polymerase subunit omega from Pseudomonas fluorescens (strain Pf0-1).